The following is a 314-amino-acid chain: Methionyl-tRNA formyltransferase (314 aa).

112 to 115 (SLLP) provides a ligand contact to (6S)-5,6,7,8-tetrahydrofolate.

This sequence belongs to the Fmt family.

The enzyme catalyses L-methionyl-tRNA(fMet) + (6R)-10-formyltetrahydrofolate = N-formyl-L-methionyl-tRNA(fMet) + (6S)-5,6,7,8-tetrahydrofolate + H(+). In terms of biological role, attaches a formyl group to the free amino group of methionyl-tRNA(fMet). The formyl group appears to play a dual role in the initiator identity of N-formylmethionyl-tRNA by promoting its recognition by IF2 and preventing the misappropriation of this tRNA by the elongation apparatus. In Aeromonas salmonicida (strain A449), this protein is Methionyl-tRNA formyltransferase.